A 259-amino-acid polypeptide reads, in one-letter code: LOB domain-containing protein CRL1 (259 aa).

The LOB domain maps to 6–108; it reads SPCGACKFLR…AQLASLKAAA (103 aa).

Belongs to the LOB domain-containing protein family. As to quaternary structure, can form homodimers. As to expression, expressed in unelongating basal internodes, at the base of shoot in parenchyma cells adjacent to the peripheral vascular cylinder of the stem, and root pericycle cells. Expressed in lateral and adventitious root primordia, tiller primordia, vascular tissues, scutellum, and young pedicels.

It localises to the nucleus. Functionally, acts as a positive regulator of adventitious (crown) root formation by promoting its initiation. Acts as a positive regulator of lateral root formation. Regulated by the auxin response factor and transcriptional activator ARF23/ARF1. Involved in auxin-mediated cell dedifferentiation, and may promote the initial cell division in the pericycle cells adjacent to the peripheral vascular cylinder at the base of the stem. May act upstream of the gene regulatory network controlling adventitious root (crown) development. The sequence is that of LOB domain-containing protein CRL1 from Oryza sativa subsp. japonica (Rice).